A 109-amino-acid polypeptide reads, in one-letter code: Elicitor peptide 2 (109 aa).

Residues 1-73 constitute a propeptide that is removed on maturation; the sequence is MEKLDKRREE…KDDDVVVLLR (73 aa). Residues 74–88 are compositionally biased toward basic and acidic residues; that stretch reads DNKAKSKKRDKEKPS. The disordered stretch occupies residues 74–109; the sequence is DNKAKSKKRDKEKPSSGRPGQTNSVPNAAIQVYKED.

The protein belongs to the brassicaceae elicitor peptide family.

Elicitor of plant defense. The chain is Elicitor peptide 2 (PEP2) from Arabidopsis thaliana (Mouse-ear cress).